We begin with the raw amino-acid sequence, 177 residues long: Large ribosomal subunit protein uL6 (177 aa).

The protein belongs to the universal ribosomal protein uL6 family. In terms of assembly, part of the 50S ribosomal subunit.

This protein binds to the 23S rRNA, and is important in its secondary structure. It is located near the subunit interface in the base of the L7/L12 stalk, and near the tRNA binding site of the peptidyltransferase center. This Proteus mirabilis (strain HI4320) protein is Large ribosomal subunit protein uL6.